The primary structure comprises 312 residues: tRNA dimethylallyltransferase (312 aa).

10-17 (GPTAVGKT) contacts ATP. Residue 12-17 (TAVGKT) participates in substrate binding. The interval 35 to 38 (DSMQ) is interaction with substrate tRNA.

Belongs to the IPP transferase family. Monomer. Mg(2+) serves as cofactor.

It catalyses the reaction adenosine(37) in tRNA + dimethylallyl diphosphate = N(6)-dimethylallyladenosine(37) in tRNA + diphosphate. In terms of biological role, catalyzes the transfer of a dimethylallyl group onto the adenine at position 37 in tRNAs that read codons beginning with uridine, leading to the formation of N6-(dimethylallyl)adenosine (i(6)A). This Alkaliphilus metalliredigens (strain QYMF) protein is tRNA dimethylallyltransferase.